The chain runs to 344 residues: GTPase Obg (344 aa).

One can recognise an Obg domain in the interval 1 to 159; that stretch reads MKFLDQAKVY…RWIWLRLKLI (159 aa). One can recognise an OBG-type G domain in the interval 160–327; it reads ADAGLVGLPN…ALRLLLSVVE (168 aa). GTP-binding positions include 166-173, 191-195, 212-215, 279-282, and 308-310; these read GLPNAGKS, FTTLH, DIPG, SKVD, and SAQ. Mg(2+) is bound by residues serine 173 and threonine 193.

The protein belongs to the TRAFAC class OBG-HflX-like GTPase superfamily. OBG GTPase family. Monomer. Mg(2+) serves as cofactor.

The protein localises to the cytoplasm. Its function is as follows. An essential GTPase which binds GTP, GDP and possibly (p)ppGpp with moderate affinity, with high nucleotide exchange rates and a fairly low GTP hydrolysis rate. Plays a role in control of the cell cycle, stress response, ribosome biogenesis and in those bacteria that undergo differentiation, in morphogenesis control. The chain is GTPase Obg from Xanthobacter autotrophicus (strain ATCC BAA-1158 / Py2).